The chain runs to 294 residues: MHNIFKGLITALITPFKDNKLDLYALERIVKHQIKHEVDAILIAGSTGESSSLSFEEYKLLLQTSVEIVNKCIPIISGCSSNNTTYARALAAESTKIGVDGFMASPPSYVKPTQHGIYKHFEALHEACNLPIMLYSAPTRSGVDFSDETILRLSKLPRILALKDCGVDLERPLRIRATVKKDFNILTGNDEVVLAFNAQGGVGWTSVASNIVPNICKELLEKWNKNDTKGALEIHQKLLPLYTALFVESNPIPIKYAAHYLGLCENEIRPPLTEASDSAKKQIENIITSLSIKI.

T47 lines the pyruvate pocket. Y135 (proton donor/acceptor) is an active-site residue. K163 functions as the Schiff-base intermediate with substrate in the catalytic mechanism. T205 is a pyruvate binding site.

It belongs to the DapA family. Homotetramer; dimer of dimers.

It localises to the cytoplasm. It carries out the reaction L-aspartate 4-semialdehyde + pyruvate = (2S,4S)-4-hydroxy-2,3,4,5-tetrahydrodipicolinate + H2O + H(+). It functions in the pathway amino-acid biosynthesis; L-lysine biosynthesis via DAP pathway; (S)-tetrahydrodipicolinate from L-aspartate: step 3/4. In terms of biological role, catalyzes the condensation of (S)-aspartate-beta-semialdehyde [(S)-ASA] and pyruvate to 4-hydroxy-tetrahydrodipicolinate (HTPA). This is 4-hydroxy-tetrahydrodipicolinate synthase from Rickettsia rickettsii.